A 286-amino-acid chain; its full sequence is Phosphatidylglycerol--prolipoprotein diacylglyceryl transferase (286 aa).

4 helical membrane passes run tryptophan 25 to leucine 45, phenylalanine 65 to tyrosine 85, glycine 103 to tryptophan 123, and valine 127 to glycine 147. Arginine 148 contacts a 1,2-diacyl-sn-glycero-3-phospho-(1'-sn-glycerol). The next 3 membrane-spanning stretches (helical) occupy residues alanine 188–leucine 208, glycine 212–phenylalanine 232, and methionine 248–tryptophan 268.

The protein belongs to the Lgt family.

Its subcellular location is the cell inner membrane. It carries out the reaction L-cysteinyl-[prolipoprotein] + a 1,2-diacyl-sn-glycero-3-phospho-(1'-sn-glycerol) = an S-1,2-diacyl-sn-glyceryl-L-cysteinyl-[prolipoprotein] + sn-glycerol 1-phosphate + H(+). Its pathway is protein modification; lipoprotein biosynthesis (diacylglyceryl transfer). In terms of biological role, catalyzes the transfer of the diacylglyceryl group from phosphatidylglycerol to the sulfhydryl group of the N-terminal cysteine of a prolipoprotein, the first step in the formation of mature lipoproteins. The polypeptide is Phosphatidylglycerol--prolipoprotein diacylglyceryl transferase (Rhodopseudomonas palustris (strain ATCC BAA-98 / CGA009)).